Here is a 282-residue protein sequence, read N- to C-terminus: Phosphatidylserine decarboxylase proenzyme (282 aa).

Residues aspartate 85, histidine 142, and serine 244 each act as charge relay system; for autoendoproteolytic cleavage activity in the active site. The active-site Schiff-base intermediate with substrate; via pyruvic acid; for decarboxylase activity is the serine 244. Serine 244 carries the post-translational modification Pyruvic acid (Ser); by autocatalysis.

This sequence belongs to the phosphatidylserine decarboxylase family. PSD-B subfamily. Prokaryotic type I sub-subfamily. Heterodimer of a large membrane-associated beta subunit and a small pyruvoyl-containing alpha subunit. Pyruvate is required as a cofactor. Post-translationally, is synthesized initially as an inactive proenzyme. Formation of the active enzyme involves a self-maturation process in which the active site pyruvoyl group is generated from an internal serine residue via an autocatalytic post-translational modification. Two non-identical subunits are generated from the proenzyme in this reaction, and the pyruvate is formed at the N-terminus of the alpha chain, which is derived from the carboxyl end of the proenzyme. The autoendoproteolytic cleavage occurs by a canonical serine protease mechanism, in which the side chain hydroxyl group of the serine supplies its oxygen atom to form the C-terminus of the beta chain, while the remainder of the serine residue undergoes an oxidative deamination to produce ammonia and the pyruvoyl prosthetic group on the alpha chain. During this reaction, the Ser that is part of the protease active site of the proenzyme becomes the pyruvoyl prosthetic group, which constitutes an essential element of the active site of the mature decarboxylase.

The protein resides in the cell membrane. The catalysed reaction is a 1,2-diacyl-sn-glycero-3-phospho-L-serine + H(+) = a 1,2-diacyl-sn-glycero-3-phosphoethanolamine + CO2. The protein operates within phospholipid metabolism; phosphatidylethanolamine biosynthesis; phosphatidylethanolamine from CDP-diacylglycerol: step 2/2. In terms of biological role, catalyzes the formation of phosphatidylethanolamine (PtdEtn) from phosphatidylserine (PtdSer). The sequence is that of Phosphatidylserine decarboxylase proenzyme from Coxiella burnetii (strain Dugway 5J108-111).